The chain runs to 459 residues: Ribulose bisphosphate carboxylase large chain (459 aa).

Lysine 4 is modified (N6,N6,N6-trimethyllysine). Substrate contacts are provided by asparagine 113 and threonine 163. The active-site Proton acceptor is lysine 165. Position 167 (lysine 167) interacts with substrate. Residues lysine 191, aspartate 193, and glutamate 194 each coordinate Mg(2+). Position 191 is an N6-carboxylysine (lysine 191). Histidine 284 serves as the catalytic Proton acceptor. 3 residues coordinate substrate: arginine 285, histidine 317, and serine 369.

The protein belongs to the RuBisCO large chain family. Type I subfamily. As to quaternary structure, heterohexadecamer of 8 large chains and 8 small chains; disulfide-linked. The disulfide link is formed within the large subunit homodimers. It depends on Mg(2+) as a cofactor. In terms of processing, the disulfide bond which can form in the large chain dimeric partners within the hexadecamer appears to be associated with oxidative stress and protein turnover.

The protein localises to the plastid. It localises to the chloroplast. The catalysed reaction is 2 (2R)-3-phosphoglycerate + 2 H(+) = D-ribulose 1,5-bisphosphate + CO2 + H2O. It carries out the reaction D-ribulose 1,5-bisphosphate + O2 = 2-phosphoglycolate + (2R)-3-phosphoglycerate + 2 H(+). In terms of biological role, ruBisCO catalyzes two reactions: the carboxylation of D-ribulose 1,5-bisphosphate, the primary event in carbon dioxide fixation, as well as the oxidative fragmentation of the pentose substrate in the photorespiration process. Both reactions occur simultaneously and in competition at the same active site. This chain is Ribulose bisphosphate carboxylase large chain, found in Parnassia fimbriata (Fringed grass-of-Parnassus).